An 887-amino-acid polypeptide reads, in one-letter code: Alanine--tRNA ligase (887 aa).

Residues H565, H569, C674, and H678 each contribute to the Zn(2+) site.

It belongs to the class-II aminoacyl-tRNA synthetase family. Zn(2+) is required as a cofactor.

It is found in the cytoplasm. It catalyses the reaction tRNA(Ala) + L-alanine + ATP = L-alanyl-tRNA(Ala) + AMP + diphosphate. Its function is as follows. Catalyzes the attachment of alanine to tRNA(Ala) in a two-step reaction: alanine is first activated by ATP to form Ala-AMP and then transferred to the acceptor end of tRNA(Ala). Also edits incorrectly charged Ser-tRNA(Ala) and Gly-tRNA(Ala) via its editing domain. The protein is Alanine--tRNA ligase of Erythrobacter litoralis (strain HTCC2594).